The following is a 235-amino-acid chain: NAD(P)H-quinone oxidoreductase subunit K (235 aa).

Residues cysteine 52, cysteine 53, cysteine 117, and cysteine 148 each coordinate [4Fe-4S] cluster. The span at 216-226 (AGAAVAPQLPV) shows a compositional bias: low complexity. The disordered stretch occupies residues 216–235 (AGAAVAPQLPVTEKEGRDRA).

The protein belongs to the complex I 20 kDa subunit family. As to quaternary structure, NDH-1 can be composed of about 15 different subunits; different subcomplexes with different compositions have been identified which probably have different functions. Requires [4Fe-4S] cluster as cofactor.

The protein localises to the cellular thylakoid membrane. The enzyme catalyses a plastoquinone + NADH + (n+1) H(+)(in) = a plastoquinol + NAD(+) + n H(+)(out). It catalyses the reaction a plastoquinone + NADPH + (n+1) H(+)(in) = a plastoquinol + NADP(+) + n H(+)(out). In terms of biological role, NDH-1 shuttles electrons from an unknown electron donor, via FMN and iron-sulfur (Fe-S) centers, to quinones in the respiratory and/or the photosynthetic chain. The immediate electron acceptor for the enzyme in this species is believed to be plastoquinone. Couples the redox reaction to proton translocation, and thus conserves the redox energy in a proton gradient. Cyanobacterial NDH-1 also plays a role in inorganic carbon-concentration. The polypeptide is NAD(P)H-quinone oxidoreductase subunit K (Synechococcus elongatus (strain ATCC 33912 / PCC 7942 / FACHB-805) (Anacystis nidulans R2)).